The primary structure comprises 340 residues: Flap endonuclease 1 (340 aa).

An N-domain region spans residues 1–98 (MGVPIGEIIP…KELEKRREAR (98 aa)). D27, D80, E152, E154, D173, D175, and D236 together coordinate Mg(2+). The I-domain stretch occupies residues 116–258 (EARKYAQRAT…KALEIVRHSK (143 aa)). The interaction with PCNA stretch occupies residues 330–338 (KQSTLESWF).

The protein belongs to the XPG/RAD2 endonuclease family. FEN1 subfamily. As to quaternary structure, interacts with PCNA. PCNA stimulates the nuclease activity without altering cleavage specificity. Requires Mg(2+) as cofactor.

Structure-specific nuclease with 5'-flap endonuclease and 5'-3' exonuclease activities involved in DNA replication and repair. During DNA replication, cleaves the 5'-overhanging flap structure that is generated by displacement synthesis when DNA polymerase encounters the 5'-end of a downstream Okazaki fragment. Binds the unpaired 3'-DNA end and kinks the DNA to facilitate 5' cleavage specificity. Cleaves one nucleotide into the double-stranded DNA from the junction in flap DNA, leaving a nick for ligation. Also involved in the base excision repair (BER) pathway. Acts as a genome stabilization factor that prevents flaps from equilibrating into structures that lead to duplications and deletions. Also possesses 5'-3' exonuclease activity on nicked or gapped double-stranded DNA. The protein is Flap endonuclease 1 of Pyrococcus furiosus (strain ATCC 43587 / DSM 3638 / JCM 8422 / Vc1).